A 635-amino-acid polypeptide reads, in one-letter code: Early transcription factor 70 kDa subunit (635 aa).

The 154-residue stretch at arginine 32–glutamate 185 folds into the Helicase ATP-binding domain. An ATP-binding site is contributed by histidine 45 to threonine 52. A DEXH box motif is present at residues aspartate 135 to histidine 138.

Belongs to the helicase family. VETF subfamily. In terms of assembly, heterodimer of a 70 kDa and a 82 kDa subunit. Part of the early transcription complex composed of ETF, RAP94, and the DNA-directed RNA polymerase.

It localises to the virion. Its function is as follows. Acts with RNA polymerase to initiate transcription from early gene promoters. Is recruited by the RPO-associated protein of 94 kDa (RAP94) to form the early transcription complex, which also contains the core RNA polymerase. ETF heterodimer binds to early gene promoters. The chain is Early transcription factor 70 kDa subunit (VETFS) from Homo sapiens (Human).